A 527-amino-acid polypeptide reads, in one-letter code: Bifunctional purine biosynthesis protein PurH (527 aa).

Residues 1-149 (MASDFLPVRR…KNFARVAVAT (149 aa)) form the MGS-like domain.

The protein belongs to the PurH family.

It catalyses the reaction (6R)-10-formyltetrahydrofolate + 5-amino-1-(5-phospho-beta-D-ribosyl)imidazole-4-carboxamide = 5-formamido-1-(5-phospho-D-ribosyl)imidazole-4-carboxamide + (6S)-5,6,7,8-tetrahydrofolate. It carries out the reaction IMP + H2O = 5-formamido-1-(5-phospho-D-ribosyl)imidazole-4-carboxamide. It functions in the pathway purine metabolism; IMP biosynthesis via de novo pathway; 5-formamido-1-(5-phospho-D-ribosyl)imidazole-4-carboxamide from 5-amino-1-(5-phospho-D-ribosyl)imidazole-4-carboxamide (10-formyl THF route): step 1/1. Its pathway is purine metabolism; IMP biosynthesis via de novo pathway; IMP from 5-formamido-1-(5-phospho-D-ribosyl)imidazole-4-carboxamide: step 1/1. The polypeptide is Bifunctional purine biosynthesis protein PurH (Xanthomonas euvesicatoria pv. vesicatoria (strain 85-10) (Xanthomonas campestris pv. vesicatoria)).